Here is a 385-residue protein sequence, read N- to C-terminus: Deoxyguanosinetriphosphate triphosphohydrolase-like protein (385 aa).

The HD domain occupies 75-204 (RLTHSLEVAQ…INFADEIAYN (130 aa)).

This sequence belongs to the dGTPase family. Type 2 subfamily.

The polypeptide is Deoxyguanosinetriphosphate triphosphohydrolase-like protein (Geobacter sulfurreducens (strain ATCC 51573 / DSM 12127 / PCA)).